Consider the following 150-residue polypeptide: 3-hydroxyacyl-[acyl-carrier-protein] dehydratase FabZ (150 aa).

The active site involves histidine 51.

The protein belongs to the thioester dehydratase family. FabZ subfamily.

It is found in the cytoplasm. The catalysed reaction is a (3R)-hydroxyacyl-[ACP] = a (2E)-enoyl-[ACP] + H2O. Functionally, involved in unsaturated fatty acids biosynthesis. Catalyzes the dehydration of short chain beta-hydroxyacyl-ACPs and long chain saturated and unsaturated beta-hydroxyacyl-ACPs. The chain is 3-hydroxyacyl-[acyl-carrier-protein] dehydratase FabZ from Legionella pneumophila (strain Lens).